Reading from the N-terminus, the 272-residue chain is Potassium channel regulatory protein (272 aa).

The 102-residue stretch at 5–106 (ELVTLNVGGK…LLNPYLLQPR (102 aa)) folds into the BTB domain.

Can form homooligomers. Interacts with KCNA1 (via cytoplasmic N-terminal domain) and KCNA4. As to expression, ubiquitous in normal tissues and expressed in some tumor tissues.

Its subcellular location is the endoplasmic reticulum. In terms of biological role, inhibits potassium fluxes in cells. May regulate Kv1 family channel proteins by retaining a fraction of channels in endomembranes. This chain is Potassium channel regulatory protein (KCNRG), found in Homo sapiens (Human).